We begin with the raw amino-acid sequence, 395 residues long: S-adenosylmethionine synthase (395 aa).

Position 16 (histidine 16) interacts with ATP. Aspartate 18 contacts Mg(2+). Glutamate 44 is a K(+) binding site. Residues glutamate 57 and glutamine 100 each coordinate L-methionine. The flexible loop stretch occupies residues 100–110 (QSPDIAQGVDR). ATP-binding positions include 167–169 (DAK), 233–234 (RF), aspartate 242, 248–249 (RK), alanine 265, and lysine 269. L-methionine is bound at residue aspartate 242. Residue lysine 273 coordinates L-methionine.

It belongs to the AdoMet synthase family. Homotetramer; dimer of dimers. Mg(2+) is required as a cofactor. The cofactor is K(+).

The protein localises to the cytoplasm. It carries out the reaction L-methionine + ATP + H2O = S-adenosyl-L-methionine + phosphate + diphosphate. Its pathway is amino-acid biosynthesis; S-adenosyl-L-methionine biosynthesis; S-adenosyl-L-methionine from L-methionine: step 1/1. Functionally, catalyzes the formation of S-adenosylmethionine (AdoMet) from methionine and ATP. The overall synthetic reaction is composed of two sequential steps, AdoMet formation and the subsequent tripolyphosphate hydrolysis which occurs prior to release of AdoMet from the enzyme. This chain is S-adenosylmethionine synthase, found in Burkholderia ambifaria (strain MC40-6).